Consider the following 325-residue polypeptide: NAD kinase (325 aa).

The Proton acceptor role is filled by Asp91. NAD(+) is bound by residues 91–92 (DG), His96, 165–166 (ND), His176, His193, Asp195, and 206–211 (TAYALS).

It belongs to the NAD kinase family. It depends on a divalent metal cation as a cofactor.

The protein resides in the cytoplasm. It catalyses the reaction NAD(+) + ATP = ADP + NADP(+) + H(+). Its function is as follows. Involved in the regulation of the intracellular balance of NAD and NADP, and is a key enzyme in the biosynthesis of NADP. Catalyzes specifically the phosphorylation on 2'-hydroxyl of the adenosine moiety of NAD to yield NADP. The sequence is that of NAD kinase from Psychrobacter arcticus (strain DSM 17307 / VKM B-2377 / 273-4).